Reading from the N-terminus, the 325-residue chain is Methionyl-tRNA formyltransferase (325 aa).

Residue 113–116 participates in (6S)-5,6,7,8-tetrahydrofolate binding; sequence SLLP.

It belongs to the Fmt family.

It carries out the reaction L-methionyl-tRNA(fMet) + (6R)-10-formyltetrahydrofolate = N-formyl-L-methionyl-tRNA(fMet) + (6S)-5,6,7,8-tetrahydrofolate + H(+). In terms of biological role, attaches a formyl group to the free amino group of methionyl-tRNA(fMet). The formyl group appears to play a dual role in the initiator identity of N-formylmethionyl-tRNA by promoting its recognition by IF2 and preventing the misappropriation of this tRNA by the elongation apparatus. The chain is Methionyl-tRNA formyltransferase from Chromohalobacter salexigens (strain ATCC BAA-138 / DSM 3043 / CIP 106854 / NCIMB 13768 / 1H11).